The following is a 261-amino-acid chain: Leucyl/phenylalanyl-tRNA--protein transferase (261 aa).

Belongs to the L/F-transferase family.

The protein resides in the cytoplasm. It catalyses the reaction N-terminal L-lysyl-[protein] + L-leucyl-tRNA(Leu) = N-terminal L-leucyl-L-lysyl-[protein] + tRNA(Leu) + H(+). The enzyme catalyses N-terminal L-arginyl-[protein] + L-leucyl-tRNA(Leu) = N-terminal L-leucyl-L-arginyl-[protein] + tRNA(Leu) + H(+). The catalysed reaction is L-phenylalanyl-tRNA(Phe) + an N-terminal L-alpha-aminoacyl-[protein] = an N-terminal L-phenylalanyl-L-alpha-aminoacyl-[protein] + tRNA(Phe). In terms of biological role, functions in the N-end rule pathway of protein degradation where it conjugates Leu, Phe and, less efficiently, Met from aminoacyl-tRNAs to the N-termini of proteins containing an N-terminal arginine or lysine. In Yersinia pestis bv. Antiqua (strain Antiqua), this protein is Leucyl/phenylalanyl-tRNA--protein transferase.